A 313-amino-acid chain; its full sequence is Interferon-inducible double-stranded RNA-dependent protein kinase activator A (313 aa).

The interval 1–21 (MSQSRHRAAAPPMEREDSGTF) is disordered. Sufficient for self-association and interaction with TARBP2 regions lie at residues 1-103 (MSQS…KANA), 102-195 (NASI…FSNI), and 195-313 (ISPE…AERK). Residue serine 18 is modified to Phosphoserine. 3 DRBM domains span residues 34–101 (TPIQ…ILKA), 126–194 (NPIG…KFSN), and 240–308 (DYIQ…YLKI). Phosphoserine is present on residues serine 167, serine 246, and serine 287.

The protein belongs to the PRKRA family. As to quaternary structure, homodimer. Interacts with EIF2AK2/PKR through its DRBM domains. Interacts with DICER1, AGO2 and TARBP2. Also able to interact with dsRNA. Interacts with UBC9. Forms a complex with UBC9 and p53/TP53. Interacts with DUS2L (via DRBM domain). Post-translationally, phosphorylated at Ser-246 in unstressed cells and at Ser-287 in stressed cells. Phosphorylation at Ser-246 appears to be a prerequisite for subsequent phosphorylation at Ser-287. Phosphorylation at Ser-246 and Ser-287 are necessary for activation of EIF2AK2/PKR under conditions of stress.

The protein localises to the cytoplasm. It localises to the perinuclear region. Its function is as follows. Activates EIF2AK2/PKR in the absence of double-stranded RNA (dsRNA), leading to phosphorylation of EIF2S1/EFI2-alpha and inhibition of translation and induction of apoptosis. Required for siRNA production by DICER1 and for subsequent siRNA-mediated post-transcriptional gene silencing. Does not seem to be required for processing of pre-miRNA to miRNA by DICER1. Promotes UBC9-p53/TP53 association and sumoylation and phosphorylation of p53/TP53 at 'Lys-386' at 'Ser-392' respectively and enhances its activity in a EIF2AK2/PKR-dependent manner. This Bos taurus (Bovine) protein is Interferon-inducible double-stranded RNA-dependent protein kinase activator A (PRKRA).